The chain runs to 97 residues: Nucleoid-associated protein HPP12_0031 (97 aa).

It belongs to the YbaB/EbfC family. Homodimer.

It is found in the cytoplasm. The protein localises to the nucleoid. Its function is as follows. Binds to DNA and alters its conformation. May be involved in regulation of gene expression, nucleoid organization and DNA protection. This chain is Nucleoid-associated protein HPP12_0031, found in Helicobacter pylori (strain P12).